Reading from the N-terminus, the 284-residue chain is NAD kinase (284 aa).

Asp-70 (proton acceptor) is an active-site residue. Residues 70–71 (DG), 139–140 (NE), Lys-167, Asp-169, Leu-177, 180–185 (TAYNLS), and Gln-236 each bind NAD(+).

This sequence belongs to the NAD kinase family. A divalent metal cation is required as a cofactor.

It localises to the cytoplasm. It carries out the reaction NAD(+) + ATP = ADP + NADP(+) + H(+). Functionally, involved in the regulation of the intracellular balance of NAD and NADP, and is a key enzyme in the biosynthesis of NADP. Catalyzes specifically the phosphorylation on 2'-hydroxyl of the adenosine moiety of NAD to yield NADP. The sequence is that of NAD kinase from Helicobacter pylori (strain HPAG1).